We begin with the raw amino-acid sequence, 231 residues long: Beta-casein (231 aa).

Residues 1-15 form the signal peptide; that stretch reads MKVFILACLVALALA. Serine 24 carries the post-translational modification Phosphoserine. Position 27 is a phosphothreonine (threonine 27). A phosphoserine mark is found at serine 29, serine 31, and serine 32.

Belongs to the beta-casein family. As to expression, mammary gland specific. Secreted in milk.

It localises to the secreted. Functionally, important role in determination of the surface properties of the casein micelles. The chain is Beta-casein (Csn2) from Rattus norvegicus (Rat).